The chain runs to 564 residues: Proline--tRNA ligase (564 aa).

The protein belongs to the class-II aminoacyl-tRNA synthetase family. ProS type 1 subfamily. As to quaternary structure, homodimer.

It localises to the cytoplasm. It carries out the reaction tRNA(Pro) + L-proline + ATP = L-prolyl-tRNA(Pro) + AMP + diphosphate. Catalyzes the attachment of proline to tRNA(Pro) in a two-step reaction: proline is first activated by ATP to form Pro-AMP and then transferred to the acceptor end of tRNA(Pro). As ProRS can inadvertently accommodate and process non-cognate amino acids such as alanine and cysteine, to avoid such errors it has two additional distinct editing activities against alanine. One activity is designated as 'pretransfer' editing and involves the tRNA(Pro)-independent hydrolysis of activated Ala-AMP. The other activity is designated 'posttransfer' editing and involves deacylation of mischarged Ala-tRNA(Pro). The misacylated Cys-tRNA(Pro) is not edited by ProRS. This Coxiella burnetii (strain RSA 331 / Henzerling II) protein is Proline--tRNA ligase.